We begin with the raw amino-acid sequence, 89 residues long: CRISPR-associated endoribonuclease Cas2 2 (89 aa).

Mg(2+) is bound at residue Asp-9.

The protein belongs to the CRISPR-associated endoribonuclease Cas2 protein family. In terms of assembly, homodimer, forms a heterotetramer with a Cas1 homodimer. It depends on Mg(2+) as a cofactor.

Its function is as follows. CRISPR (clustered regularly interspaced short palindromic repeat), is an adaptive immune system that provides protection against mobile genetic elements (viruses, transposable elements and conjugative plasmids). CRISPR clusters contain sequences complementary to antecedent mobile elements and target invading nucleic acids. CRISPR clusters are transcribed and processed into CRISPR RNA (crRNA). Functions as a ssRNA-specific endoribonuclease. Involved in the integration of spacer DNA into the CRISPR cassette. The polypeptide is CRISPR-associated endoribonuclease Cas2 2 (Methanospirillum hungatei JF-1 (strain ATCC 27890 / DSM 864 / NBRC 100397 / JF-1)).